The following is a 232-amino-acid chain: DOA4-independent degradation protein 4 (232 aa).

Residues 14 to 97 are a coiled coil; it reads PQERLKKNQR…AISLRIQAVR (84 aa). The interaction with VPS4 stretch occupies residues 183–232; the sequence is LQSTPQNLVSNAPIAETAMGIPEPIGAGSEFHGNPDDDLQARLNTLKKQT. Positions 203 to 232 are disordered; it reads IPEPIGAGSEFHGNPDDDLQARLNTLKKQT. The MIT-interacting motif motif lies at 219–229; it reads DDLQARLNTLK.

This sequence belongs to the SNF7 family. In terms of assembly, core component of the ESCRT-III complex (endosomal sorting required for transport complex III). ESCRT-III appears to be sequentially assembled as a flat lattice on the endosome membrane and forms a transient 450 kDa complex that contains DID4, oligomerized SNF7, VPS20 and VPS24. SNF7 oligomerization into a membrane-associated filament is nucleated by association of SNF7 with VPS20; the process is terminated through association of VPS24, possibly by capping the SNF7 filament. VPS24 subsequently associates with DID4/VPS2.

The protein localises to the cytoplasm. Its subcellular location is the endosome membrane. Required for the sorting and concentration of proteins resulting in the entry of these proteins into the invaginating vesicles of the multivesicular body (MVB). Acts a component of the ESCRT-III complex, which appears to be critical for late steps in MVB sorting, such as membrane invagination and final cargo sorting and recruitment of late-acting components of the sorting machinery. The MVB pathway requires the sequential function of ESCRT-O, -I,-II and -III complex assemblies. Can directly stimulate VPS4 ATPase activity. The DID4/VPS2-VPS24 subcomplex is required for the VPS4-dependent dissociation of ESCRT-III. The sequence is that of DOA4-independent degradation protein 4 (DID4) from Saccharomyces cerevisiae (strain ATCC 204508 / S288c) (Baker's yeast).